Consider the following 301-residue polypeptide: MTTKHDVKTFQGFIMTLQEYWAQQGCAIVQPLDMEVGAGTFHPMTFLRALGPEPMSCAYVQPSRRPTDGRYGDNPNRLQHFYQYQVVLKPSPDNIQELYLGSLEAAGIDMNIHDVRFVEDNWESPTLGAWGLGWEVWLNGMEVSQFTYFQQVGGLECKPVTGEITYGLERLAMYIQEVDNVYDLVWTDGPMGKVMYGDIFHQNEVEQSAYNFEHANVEVLFRAFDDCEVACQHLLSLEKPLALPAYEQVMKASHAFNLLDARHAISVTERQRYILRVRTMAKGVAEAYYQSREALGFPIGK.

The protein belongs to the class-II aminoacyl-tRNA synthetase family. In terms of assembly, tetramer of two alpha and two beta subunits.

Its subcellular location is the cytoplasm. The catalysed reaction is tRNA(Gly) + glycine + ATP = glycyl-tRNA(Gly) + AMP + diphosphate. The protein is Glycine--tRNA ligase alpha subunit of Shewanella piezotolerans (strain WP3 / JCM 13877).